Here is a 447-residue protein sequence, read N- to C-terminus: Exodeoxyribonuclease 7 large subunit (447 aa).

Belongs to the XseA family. In terms of assembly, heterooligomer composed of large and small subunits.

Its subcellular location is the cytoplasm. The enzyme catalyses Exonucleolytic cleavage in either 5'- to 3'- or 3'- to 5'-direction to yield nucleoside 5'-phosphates.. Its function is as follows. Bidirectionally degrades single-stranded DNA into large acid-insoluble oligonucleotides, which are then degraded further into small acid-soluble oligonucleotides. The sequence is that of Exodeoxyribonuclease 7 large subunit from Streptococcus mutans serotype c (strain ATCC 700610 / UA159).